The chain runs to 99 residues: Cell division protein FtsB (99 aa).

Over 1–3 (MKF) the chain is Cytoplasmic. A helical membrane pass occupies residues 4–21 (FVIALIVLLGLLQYRLWS). Topologically, residues 22 to 99 (GSNSLPEYFV…GERSVSSPSQ (78 aa)) are periplasmic. Residues 36–73 (IAVQQEGNDKLNERNQVLKEEIIDLKSGTEAIEERARN) adopt a coiled-coil conformation.

The protein belongs to the FtsB family. Part of a complex composed of FtsB, FtsL and FtsQ.

The protein localises to the cell inner membrane. Its function is as follows. Essential cell division protein. May link together the upstream cell division proteins, which are predominantly cytoplasmic, with the downstream cell division proteins, which are predominantly periplasmic. This is Cell division protein FtsB from Shewanella sp. (strain W3-18-1).